Consider the following 242-residue polypeptide: Ubiquinone/menaquinone biosynthesis C-methyltransferase UbiE (242 aa).

S-adenosyl-L-methionine contacts are provided by residues threonine 69, aspartate 87, and 114–115 (NA).

This sequence belongs to the class I-like SAM-binding methyltransferase superfamily. MenG/UbiE family.

It catalyses the reaction a 2-demethylmenaquinol + S-adenosyl-L-methionine = a menaquinol + S-adenosyl-L-homocysteine + H(+). It carries out the reaction a 2-methoxy-6-(all-trans-polyprenyl)benzene-1,4-diol + S-adenosyl-L-methionine = a 5-methoxy-2-methyl-3-(all-trans-polyprenyl)benzene-1,4-diol + S-adenosyl-L-homocysteine + H(+). The protein operates within quinol/quinone metabolism; menaquinone biosynthesis; menaquinol from 1,4-dihydroxy-2-naphthoate: step 2/2. It functions in the pathway cofactor biosynthesis; ubiquinone biosynthesis. Its function is as follows. Methyltransferase required for the conversion of demethylmenaquinol (DMKH2) to menaquinol (MKH2) and the conversion of 2-polyprenyl-6-methoxy-1,4-benzoquinol (DDMQH2) to 2-polyprenyl-3-methyl-6-methoxy-1,4-benzoquinol (DMQH2). This Zymomonas mobilis subsp. mobilis (strain ATCC 31821 / ZM4 / CP4) protein is Ubiquinone/menaquinone biosynthesis C-methyltransferase UbiE.